Consider the following 870-residue polypeptide: LPS-assembly protein LptD (870 aa).

A signal peptide spans 1–25; that stretch reads MKQGKSFIFYCLVLLLCGFQQLSSA.

The protein belongs to the LptD family. Component of the lipopolysaccharide transport and assembly complex. Interacts with LptE and LptA.

The protein resides in the cell outer membrane. Its function is as follows. Together with LptE, is involved in the assembly of lipopolysaccharide (LPS) at the surface of the outer membrane. This chain is LPS-assembly protein LptD, found in Coxiella burnetii (strain RSA 493 / Nine Mile phase I).